The chain runs to 3483 residues: Nonribosomal peptide synthetase Ao415 (3483 aa).

The segment at 281–669 (TFKKLNETSN…DVHPLIKDVV (389 aa)) is adenylation 1. In terms of domain architecture, Carrier 1 spans 775-851 (EVFDELSTKI…GLRDHVSGKK (77 aa)). An O-(pantetheine 4'-phosphoryl)serine modification is found at Ser-812. The tract at residues 886–1297 (ANVLPCSPMQ…YCLLHMLQNQ (412 aa)) is condensation 1. Residues 1363–1758 (TYRQFDDMGN…SADKDVAEIV (396 aa)) are adenylation 2. Residues 1865–1941 (EELSETEKVI…SLAKALSSAN (77 aa)) form the Carrier 2 domain. O-(pantetheine 4'-phosphoryl)serine is present on Ser-1901. A condensation 2 region spans residues 1981–2379 (IKPCTPLQEG…LLKNPEQEVA (399 aa)). A Carrier 3 domain is found at 2412-2485 (TEAAVSIRRE…RMVVYLSSTK (74 aa)). Ser-2446 carries the O-(pantetheine 4'-phosphoryl)serine modification. Positions 2520–2917 (ESILPTTPLQ…MLQKIIGNPL (398 aa)) are condensation 3. The region spanning 2954-3030 (DNYQNLERQV…KICLFLDKKQ (77 aa)) is the Carrier 4 domain. Residue Ser-2991 is modified to O-(pantetheine 4'-phosphoryl)serine. The condensation 4 stretch occupies residues 3084–3368 (SEGRIFLPTF…VQEDLLKIST (285 aa)).

Belongs to the NRP synthetase family.

It functions in the pathway siderophore biosynthesis. Functionally, nonribosomal peptide synthetase; part of the gene cluster that mediates the biosynthesis of desferriferrichrome that chelates Fe(3+) to form ferrichrome. Fe(3+) is a key factor for induction of trap formation and the fungus uses the iron chelating desferriferrichrome to sequester Fe(3+) to inhibit trap formation and increase nematicidal activity. The biosynthesis of desferriferrichrome requires the action of the L-ornithine N(5)-oxygenase (LOO) Ao414 that hydroxylates L-ornithine at N(5), resulting in the formation of N(5)-hydroxyl-L-ornithine, which is subsequently N-acetylated to yield N(5)-acetyl-N(5)-hydroxy-L-ornithine (L-AHO). L-AHO harbors one hydroxamate moiety, which is the key core responsible for chelating iron. Then, L-AHO is further condensated with glycines to form desferriferrichrome through the NRPS protein Ao415. This Arthrobotrys oligospora (strain ATCC 24927 / CBS 115.81 / DSM 1491) (Nematode-trapping fungus) protein is Nonribosomal peptide synthetase Ao415.